A 543-amino-acid chain; its full sequence is Chaperonin GroEL (543 aa).

Residues 29–32 (TLGP), 86–90 (DGTTT), Gly413, 476–478 (NAA), and Asp492 contribute to the ATP site.

It belongs to the chaperonin (HSP60) family. In terms of assembly, forms a cylinder of 14 subunits composed of two heptameric rings stacked back-to-back. Interacts with the co-chaperonin GroES.

The protein localises to the cytoplasm. It catalyses the reaction ATP + H2O + a folded polypeptide = ADP + phosphate + an unfolded polypeptide.. In terms of biological role, together with its co-chaperonin GroES, plays an essential role in assisting protein folding. The GroEL-GroES system forms a nano-cage that allows encapsulation of the non-native substrate proteins and provides a physical environment optimized to promote and accelerate protein folding. In Streptococcus pyogenes serotype M49 (strain NZ131), this protein is Chaperonin GroEL.